Here is a 313-residue protein sequence, read N- to C-terminus: Methionyl-tRNA formyltransferase (313 aa).

Ser-110 to Pro-113 lines the (6S)-5,6,7,8-tetrahydrofolate pocket.

Belongs to the Fmt family.

The enzyme catalyses L-methionyl-tRNA(fMet) + (6R)-10-formyltetrahydrofolate = N-formyl-L-methionyl-tRNA(fMet) + (6S)-5,6,7,8-tetrahydrofolate + H(+). Functionally, attaches a formyl group to the free amino group of methionyl-tRNA(fMet). The formyl group appears to play a dual role in the initiator identity of N-formylmethionyl-tRNA by promoting its recognition by IF2 and preventing the misappropriation of this tRNA by the elongation apparatus. This Enterococcus faecalis (strain ATCC 700802 / V583) protein is Methionyl-tRNA formyltransferase.